Consider the following 49-residue polypeptide: Large ribosomal subunit protein bL32 (49 aa).

This sequence belongs to the bacterial ribosomal protein bL32 family.

This chain is Large ribosomal subunit protein bL32, found in Nitratiruptor sp. (strain SB155-2).